The sequence spans 149 residues: Putative eggshell protein (149 aa).

A run of 6 repeats spans residues Tyr-1–Lys-5, Tyr-6–Lys-10, Tyr-11–Lys-15, Tyr-16–Lys-20, Tyr-21–Lys-25, and Tyr-26–Lys-30. The tract at residues Tyr-1 to Lys-64 is 13 X 5 AA approximate tandem repeats of Y-G-Y-[DE]-K. The 7; truncated repeat unit spans residues Gly-31–Lys-34. 3 repeat units span residues Tyr-35–Lys-39, Tyr-40–Lys-44, and Tyr-45–Lys-49. One copy of the 11; approximate repeat lies at Tyr-50–Lys-54. Repeat unit 12 spans residues Tyr-55–Lys-59. The stretch at Tyr-60–Lys-64 is one 13; approximate repeat. The segment covering Tyr-105–His-124 has biased composition (basic and acidic residues). A disordered region spans residues Tyr-105–Tyr-149. Positions Asp-125–His-141 are enriched in basic residues.

In Schistosoma mansoni (Blood fluke), this protein is Putative eggshell protein.